We begin with the raw amino-acid sequence, 84 residues long: Mitochondrial import inner membrane translocase subunit Tim9 (84 aa).

A Twin CX3C motif motif is present at residues 28–52 (CFMDCVKDFTTREVKPEETTCSESC). Cystine bridges form between cysteine 28–cysteine 52 and cysteine 32–cysteine 48.

It belongs to the small Tim family. Heterohexamer; composed of 3 copies of TIMM9 and 3 copies of TIMM10/TIM10A, named soluble 70 kDa complex. The complex forms a 6-bladed alpha-propeller structure and associates with the TIMM22 component of the TIM22 complex. Interacts with multi-pass transmembrane proteins in transit.

It is found in the mitochondrion inner membrane. Mitochondrial intermembrane chaperone that participates in the import and insertion of multi-pass transmembrane proteins into the mitochondrial inner membrane. May also be required for the transfer of beta-barrel precursors from the TOM complex to the sorting and assembly machinery (SAM complex) of the outer membrane. Acts as a chaperone-like protein that protects the hydrophobic precursors from aggregation and guide them through the mitochondrial intermembrane space. This is Mitochondrial import inner membrane translocase subunit Tim9 (timm9) from Danio rerio (Zebrafish).